We begin with the raw amino-acid sequence, 281 residues long: Gas vesicle protein L1 (281 aa).

This sequence belongs to the gas vesicle GvpF/GvpL family. May form oligomers. GvpF to GvpM interact with each other in vitro, and may form multi-subunit complex(es). Interacts with GvpC1, GvpN1 and GvpO1.

The protein resides in the gas vesicle. It localises to the cytoplasm. Functionally, proteins GvpF to GvpM might be involved in nucleating gas vesicle formation. A minor component of the gas vesicle. This the only minor gas vesicle protein that binds all the others (including GvpC1, GvpN1 and GvpO1, but not GvpA1), suggesting it might be able to assemble them. Gas vesicles are hollow, gas filled proteinaceous nanostructures found in several microbial planktonic microorganisms. They allow positioning of halobacteria at the optimal depth for growth in the poorly aerated, shallow brine pools of their habitat. Its function is as follows. Expression of a 9.5 kb p-vac DNA fragment containing 2 divergently transcribed regions (gvpD-gvpE-gvpF-gvpG-gvpH-gvpI-gvpJ-gvpK-gvpL-gvpM and gvpA-gvpC-gvpN-gvpO) allows H.volcanii to produce gas vesicles. A minimal gas vesicle can be made in H.volcanii by gvpA1-gvpO1 plus gvpF1-gvpG1-gvpJ1-gvpK1-gvpL1-gvpM1; lack of enough GvpJ1 prevents their formation. A similar region restores gas vesicle production in H.halobium without the p-vac locus, but it still has the c-vac locus. The sequence is that of Gas vesicle protein L1 (gvpL11) from Halobacterium salinarum (strain ATCC 700922 / JCM 11081 / NRC-1) (Halobacterium halobium).